Reading from the N-terminus, the 330-residue chain is Diacylglycerol acyltransferase/mycolyltransferase Ag85B (330 aa).

Positions 1–40 (MTDLSEKVRAWGRRLLVGAAAAVTLPGLIGLAGGAATANA) are cleaved as a signal peptide. 82-83 (LR) lines the substrate pocket. A fibronectin-binding region spans residues 98–108 (FEWYYQSGLSV). A disulfide bridge links Cys-127 with Cys-132. Substrate-binding residues include Ser-166 and Asp-194. Ser-166 acts as the Nucleophile in catalysis. Glu-270 is an active-site residue. Substrate contacts are provided by residues 272–275 (FVRS), Lys-279, and 302–304 (HSW). His-302 is an active-site residue.

Belongs to the mycobacterial A85 antigen family.

It localises to the secreted. The catalysed reaction is 2 alpha,alpha'-trehalose 6-mycolate = alpha,alpha'-trehalose 6,6'-bismycolate + alpha,alpha-trehalose. It carries out the reaction an acyl-CoA + a 1,2-diacyl-sn-glycerol = a triacyl-sn-glycerol + CoA. Functionally, the antigen 85 proteins (FbpA, FbpB, FbpC) are responsible for the high affinity of mycobacteria for fibronectin, a large adhesive glycoprotein, which facilitates the attachment of M.tuberculosis to murine alveolar macrophages (AMs). They also help to maintain the integrity of the cell wall by catalyzing the transfer of mycolic acids to cell wall arabinogalactan and through the synthesis of alpha,alpha-trehalose dimycolate (TDM, cord factor). They catalyze the transfer of a mycoloyl residue from one molecule of alpha,alpha-trehalose monomycolate (TMM) to another TMM, leading to the formation of TDM. The chain is Diacylglycerol acyltransferase/mycolyltransferase Ag85B (fbpB) from Mycobacterium avium.